The chain runs to 1050 residues: MAAVKKEGGALSEAMSLEGDEWELSKENVQPLRQGRIMSTLQGALAQESACNNTLQQQKRAFEYEIRFYTGNDPLDVWDRYISWTEQNYPQGGKESNMSTLLERAVEALQGEKRYYSDPRFLNLWLKLGRLCNEPLDMYSYLHNQGIGVSLAQFYISWAEEYEARENFRKADAIFQEGIQQKAEPLERLQSQHRQFQARVSRQTLLALEKEEEEEVFESSVPQRSTLAELKSKGKKTARAPIIRVGGALKAPSQNRGLQNPFPQQMQNNSRITVFDENADEASTAELSKPTVQPWIAPPMPRAKENELQAGPWNTGRSLEHRPRGNTASLIAVPAVLPSFTPYVEETARQPVMTPCKIEPSINHILSTRKPGKEEGDPLQRVQSHQQASEEKKEKMMYCKEKIYAGVGEFSFEEIRAEVFRKKLKEQREAELLTSAEKRAEMQKQIEEMEKKLKEIQTTQQERTGDQQEETMPTKETTKLQIASESQKIPGMTLSSSVCQVNCCARETSLAENIWQEQPHSKGPSVPFSIFDEFLLSEKKNKSPPADPPRVLAQRRPLAVLKTSESITSNEDVSPDVCDEFTGIEPLSEDAIITGFRNVTICPNPEDTCDFARAARFVSTPFHEIMSLKDLPSDPERLLPEEDLDVKTSEDQQTACGTIYSQTLSIKKLSPIIEDSREATHSSGFSGSSASVASTSSIKCLQIPEKLELTNETSENPTQSPWCSQYRRQLLKSLPELSASAELCIEDRPMPKLEIEKEIELGNEDYCIKREYLICEDYKLFWVAPRNSAELTVIKVSSQPVPWDFYINLKLKERLNEDFDHFCSCYQYQDGCIVWHQYINCFTLQDLLQHSEYITHEITVLIIYNLLTIVEMLHKAEIVHGDLSPRCLILRNRIHDPYDCNKNNQALKIVDFSYSVDLRVQLDVFTLSGFRTVQILEGQKILANCSSPYQVDLFGIADLAHLLLFKEHLQVFWDGSFWKLSQNISELKDGELWNKFFVRILNANDEATVSVLGELAAEMNGVFDTTFQSHLNKALWKVGKLTSPGALLFQ.

The 165-residue stretch at Phe62 to Thr226 folds into the BUB1 N-terminal domain. The short motif at Gly111–Asp118 is the Nuclear localization signal element. The interval Ala152–Pro185 is necessary for interaction with KNL1. A D-box motif is present at residues Arg224–Ser232. Lys250 carries the post-translational modification N6-acetyllysine; by PCAF. Ser367 bears the Phosphoserine mark. The tract at residues Thr368–Lys393 is disordered. Position 435 is a phosphoserine (Ser435). Residues Ile456 to Leu480 form a disordered region. Ser543, Ser665, and Ser670 each carry phosphoserine. Residue Ser676 is modified to Phosphoserine; by PLK1. Ser697 is subject to Phosphoserine. The region spanning Tyr766–Gln1050 is the Protein kinase domain. An ATP-binding site is contributed by Tyr772–Leu780. Thr792 is modified (phosphothreonine; by PLK1). Lys795 provides a ligand contact to ATP. The Proton acceptor role is filled by Asp882. A Phosphothreonine; by PLK1 modification is found at Thr1008. Thr1042 is modified (phosphothreonine). The residue at position 1043 (Ser1043) is a Phosphoserine.

Belongs to the protein kinase superfamily. Ser/Thr protein kinase family. BUB1 subfamily. Interacts with CENPE. Interacts with PLK1. Part of a complex containing BUB3, CDC20 and BUB1B. Interacts with anaphase-promoting complex/cyclosome (APC/C). Interacts with KNL1. Interacts with KAT2B. Interacts with RIPK3. Interacts with the closed conformation form of MAD2L1. Proteolytically cleaved by caspase-3 in a cell cycle specific manner. The cleavage might be involved in the durability of the cell cycle delay. Caspase-3 cleavage is associated with abrogation of the mitotic checkpoint. The major site of cleavage is at Asp-610. In terms of processing, acetylation at Lys-250 regulates its degradation and timing in anaphase entry. Post-translationally, ubiquitinated. Degraded by the proteasome. Ubiquitinated by UBR5, promoting disassembly of the mitotic checkpoint complex from the APC/C complex. Sumoylated with SUMO2 and SUMO3. The sumoylation mediates the association with CENPE at the kinetochore. In terms of processing, autophosphorylated in vitro. Intramolecular autophosphorylation is stimulated by CENPE. Phosphorylated during mitosis and hyperphosphorylated in mitotically arrested cells. Phosphorylation at Ser-670 and Ser-1043 occurs at kinetochores upon mitotic entry with dephosphorylation at the onset of anaphase. Highly expressed in thymus followed by spleen. Preferentially expressed in tissues with a high mitotic index.

It localises to the cytoplasm. The protein resides in the nucleus. It is found in the chromosome. Its subcellular location is the centromere. The protein localises to the kinetochore. It localises to the cytoskeleton. The protein resides in the microtubule organizing center. It is found in the centrosome. It catalyses the reaction L-seryl-[protein] + ATP = O-phospho-L-seryl-[protein] + ADP + H(+). The catalysed reaction is L-threonyl-[protein] + ATP = O-phospho-L-threonyl-[protein] + ADP + H(+). With respect to regulation, kinase activity stimulated by CENPE. In terms of biological role, essential component of the mitotic checkpoint. Required for normal mitosis progression. The mitotic checkpoint delays anaphase until all chromosomes are properly attached to the mitotic spindle. One of its checkpoint functions is to inhibit the activity of the anaphase-promoting complex/cyclosome (APC/C) by blocking the binding of CDC20 to APC/C, independently of its kinase activity. The other is to monitor kinetochore activities that depend on the kinetochore motor CENPE. Required for kinetochore localization of CENPE. Negatively regulates PLK1 activity in interphase cells and suppresses centrosome amplification. Also implicated in triggering apoptosis in polyploid cells that exit aberrantly from mitotic arrest. May play a role for tumor suppression. This chain is Mitotic checkpoint serine/threonine-protein kinase BUB1 beta (BUB1B), found in Homo sapiens (Human).